Consider the following 167-residue polypeptide: Ubiquitin-fold modifier-conjugating enzyme 1 (167 aa).

The active-site Glycyl thioester intermediate is Cys-116. Lys-122 is covalently cross-linked (Glycyl lysine isopeptide (Lys-Gly) (interchain with G-Cter in UFM1)).

It belongs to the ubiquitin-conjugating enzyme family. UFC1 subfamily. Interacts with UBA5 (via C-terminus). Interacts with UFL1. Interacts with UFM1. Interacts with KIRREL3. Post-translationally, ufmylated at Lys-122. Deufmylated by UFSP1.

In terms of biological role, E2-like enzyme which specifically catalyzes the second step in ufmylation. Accepts the ubiquitin-like modifier UFM1 from the E1 enzyme UBA5 and forms an intermediate with UFM1 via a thioester linkage. Ufmylation is involved in various processes, such as ribosome recycling, response to DNA damage, interferon response or reticulophagy (also called ER-phagy). In Rattus norvegicus (Rat), this protein is Ubiquitin-fold modifier-conjugating enzyme 1.